Consider the following 931-residue polypeptide: Short transient receptor potential channel 6 (931 aa).

Residues 1 to 24 (MNQSPAAFGPRRGGSPAVVAGAGA) form a disordered region. The Cytoplasmic portion of the chain corresponds to 1 to 406 (MNQSPAAFGP…GLRQQTMAVK (406 aa)). Residues 13-24 (GGSPAVVAGAGA) show a composition bias toward low complexity. ANK repeat units follow at residues 131–160 (MGQN…LSRV), 162–188 (DALL…FAEG), and 217–246 (HDVT…RIER). The chain crosses the membrane as a helical span at residues 407–427 (FLVVLAVAVGLPFLALVYWFA). Over 428–438 (PCSKMGKIMRG) the chain is Extracellular. A helical membrane pass occupies residues 439-459 (PFMKFVAHAASFTIFLGLLVM). Topologically, residues 460 to 487 (NAADRFEGTKILPNETSTDHAKQLFRMK) are cytoplasmic. A helical transmembrane segment spans residues 488–508 (TSCFSWMEMLIISWVIGMIWA). Over 509-521 (ECKEIWTQGPKEY) the chain is Extracellular. Residues 522–542 (LFELWNMLDFGMLAIFAASFI) traverse the membrane as a helical segment. Topologically, residues 543-592 (ARFMAFWHASKAQSIIDANDTLKDLTKVTLGDNVKYYNLARIKWDPSDPQ) are cytoplasmic. Residues 593–613 (IISEGLYAIAVVLSFSRIAYI) form a helical membrane-spanning segment. Over 614-636 (LPANESFGPLQISLGRTVKDIFK) the chain is Extracellular. Residue Asn617 is glycosylated (N-linked (GlcNAc...) asparagine). The ANK 4 repeat unit spans residues 618-647 (ESFGPLQISLGRTVKDIFKFMVIFIMVFVA). A helical transmembrane segment spans residues 637 to 657 (FMVIFIMVFVAFMIGMFNLYS). The Cytoplasmic portion of the chain corresponds to 658–674 (YYIGAKQNEAFTTVEES). The helical transmembrane segment at 675–695 (FKTLFWAIFGLSEVKSVVINY) threads the bilayer. Over 696-706 (NHKFIENIGYV) the chain is Extracellular. A helical transmembrane segment spans residues 707–727 (LYGVYNVTMVIVLLNMLIAMI). At 728–931 (NSSFQEIEDD…MEPNQEESNR (204 aa)) the chain is on the cytoplasmic side. A Phosphoserine modification is found at Ser815.

The protein belongs to the transient receptor (TC 1.A.4) family. STrpC subfamily. TRPC6 sub-subfamily. As to quaternary structure, homodimer; forms channel complex. Interacts with MX1 and RNF24. Phosphorylated by FYN, leading to an increase of TRPC6 channel activity.

The protein localises to the cell membrane. It catalyses the reaction Ca(2+)(in) = Ca(2+)(out). Functionally, thought to form a receptor-activated non-selective calcium permeant cation channel. Probably is operated by a phosphatidylinositol second messenger system activated by receptor tyrosine kinases or G-protein coupled receptors. Activated by diacylglycerol (DAG) in a membrane-delimited fashion, independently of protein kinase C. Seems not to be activated by intracellular calcium store depletion. The chain is Short transient receptor potential channel 6 from Bos taurus (Bovine).